The primary structure comprises 138 residues: MLQPKRTKFRKPHKVSYEGKAKGNKQVDFGEFGLMALEGAWIDARQIESARIAISKRLLKTGKMWIRIFPHMSLTKKPLEVRMGSGKGSPEKWVAVVKAGTVMFEIANVSEELMREALRAAGNKLPIKVKIVKKGEAN.

The protein belongs to the universal ribosomal protein uL16 family. As to quaternary structure, part of the 50S ribosomal subunit.

Binds 23S rRNA and is also seen to make contacts with the A and possibly P site tRNAs. The polypeptide is Large ribosomal subunit protein uL16 (Ureaplasma urealyticum serovar 10 (strain ATCC 33699 / Western)).